Consider the following 436-residue polypeptide: Acetyl-CoA decarbonylase/synthase complex subunit delta (436 aa).

It belongs to the CdhD family. As to quaternary structure, heterodimer of delta and gamma chains. The ACDS complex is made up of alpha, epsilon, beta, gamma and delta chains with a probable stoichiometry of (alpha(2)epsilon(2))(4)-beta(8)-(gamma(1)delta(1))(8).

It functions in the pathway one-carbon metabolism; methanogenesis from acetate. In terms of biological role, part of a complex that catalyzes the reversible cleavage of acetyl-CoA, allowing growth on acetate as sole source of carbon and energy. Probably maintains the overall quaternary structure of the ACDS complex. The sequence is that of Acetyl-CoA decarbonylase/synthase complex subunit delta from Methanosarcina mazei (strain ATCC BAA-159 / DSM 3647 / Goe1 / Go1 / JCM 11833 / OCM 88) (Methanosarcina frisia).